The sequence spans 253 residues: Major prion protein (253 aa).

The first 22 residues, 1–22 (MANLGCWMLVLFVATWSDLGLC), serve as a signal peptide directing secretion. The interval 23 to 38 (KKRPKPGGWNTGGSRY) is interaction with ADGRG6. The interval 23–230 (KKRPKPGGWN…ESQAYYQRGS (208 aa)) is interaction with GRB2, ERI3 and SYN1. Residues 26–108 (PKPGGWNTGG…WNKPSKPKTS (83 aa)) form a disordered region. 5 consecutive repeat copies span residues 51-59 (PQGGGGWGQ), 60-67 (PHGGGWGQ), 68-75 (PHGGGWGQ), 76-83 (PHGGGWGQ), and 84-91 (PHGGGWGQ). Positions 51–91 (PQGGGGWGQPHGGGWGQPHGGGWGQPHGGGWGQPHGGGWGQ) are 5 X 8 AA tandem repeats of P-H-G-G-G-W-G-Q. Positions 52-95 (QGGGGWGQPHGGGWGQPHGGGWGQPHGGGWGQPHGGGWGQGGGT) are enriched in gly residues. Histidine 61, glycine 62, glycine 63, histidine 69, glycine 70, glycine 71, histidine 77, glycine 78, glycine 79, histidine 85, glycine 86, and glycine 87 together coordinate Cu(2+). Residues cysteine 179 and cysteine 214 are joined by a disulfide bond. 2 N-linked (GlcNAc...) asparagine glycosylation sites follow: asparagine 181 and asparagine 197. Serine 230 carries GPI-anchor amidated serine lipidation. Positions 231 to 253 (SMVLFSSPPVILLISFLIFLIVG) are cleaved as a propeptide — removed in mature form.

Belongs to the prion family. As to quaternary structure, monomer and homodimer. Has a tendency to aggregate into amyloid fibrils containing a cross-beta spine, formed by a steric zipper of superposed beta-strands. Soluble oligomers may represent an intermediate stage on the path to fibril formation. Copper binding may promote oligomerization. Interacts with GRB2, APP, ERI3/PRNPIP and SYN1. Mislocalized cytosolically exposed PrP interacts with MGRN1; this interaction alters MGRN1 subcellular location and causes lysosomal enlargement. Interacts with APP. Interacts with KIAA1191. Interacts with ADGRG6.

The protein localises to the cell membrane. It localises to the golgi apparatus. Its function is as follows. Its primary physiological function is unclear. May play a role in neuronal development and synaptic plasticity. May be required for neuronal myelin sheath maintenance. May promote myelin homeostasis through acting as an agonist for ADGRG6 receptor. May play a role in iron uptake and iron homeostasis. Soluble oligomers are toxic to cultured neuroblastoma cells and induce apoptosis (in vitro). Association with GPC1 (via its heparan sulfate chains) targets PRNP to lipid rafts. Also provides Cu(2+) or Zn(2+) for the ascorbate-mediated GPC1 deaminase degradation of its heparan sulfate side chains. The polypeptide is Major prion protein (PRNP) (Colobus guereza (Mantled guereza)).